The primary structure comprises 551 residues: Prunin 1 Pru du 6.0101 (551 aa).

An N-terminal signal peptide occupies residues 1 to 20; the sequence is MAKAFVFSLCLLLVFNGCLA. Disulfide bonds link Cys-32-Cys-65 and Cys-108-Cys-374. In terms of domain architecture, Cupin type-1 1 spans 37 to 312; that stretch reads LQAREPDNRI…ALNVNEETAR (276 aa). Disordered stretches follow at residues 111–194, 238–293, and 311–361; these read TFEE…QKTR, NPRK…NVFS, and ARNL…QQQG. Composition is skewed to low complexity over residues 114-124, 132-148, and 168-185; these read ESQQSSQQGRQ, QQQQQGEQGRQQGQQEQ, and QEQQQGQQGRPQQQQQFR. IgE-binding stretches follow at residues 118–132, 145–159, 161–175, and 225–239; these read SSQQGRQQEQEQERQ, QQEQQQERQGRQQGR, QQEEGRQQEQQQGQQ, and LFHVSSDHNQLDQNP. Residues 254–275 are compositionally biased toward low complexity; that stretch reads QQGQSQPRQQGEQGRPGQHQQP. The interval 281–295 is igE-binding; that stretch reads QQEQQGSGNNVFSGF. Composition is skewed to polar residues over residues 282 to 293 and 311 to 323; these read QEQQGSGNNVFS and ARNLQGQNDNRNQ. Residues 339–350 are compositionally biased toward basic and acidic residues; the sequence is GRQEREHEERQQ. Over residues 351–361 the composition is skewed to low complexity; it reads EQLQQERQQQG. An NGXEET; peptidase recognition motif motif is present at residues 367-372; that stretch reads NGLEET. In terms of domain architecture, Cupin type-1 2 spans 380–529; that stretch reads ENIGNPERAD…AYQISREQAR (150 aa). Residues 510-524 form an igE-binding region; sequence RALPDEVLANAYQIS.

This sequence belongs to the 11S seed storage protein (globulins) family. In terms of assembly, hexamer of two trimers; each subunit is composed of an acidic and a basic chain derived from a single precursor and linked by a disulfide bond. Proteolytically processed from a single precursor to produce an acidic and a basic chain that are linked by a disulfide bond. As to expression, expressed in seed (at protein level).

Functionally, seed storage protein. The protein is Prunin 1 Pru du 6.0101 of Prunus dulcis (Almond).